The primary structure comprises 320 residues: Acetyl-coenzyme A carboxylase carboxyl transferase subunit alpha (320 aa).

The CoA carboxyltransferase C-terminal domain maps to 41–295 (RIEEKAGQAL…GDAIAQAFDE (255 aa)).

This sequence belongs to the AccA family. As to quaternary structure, acetyl-CoA carboxylase is a heterohexamer composed of biotin carboxyl carrier protein (AccB), biotin carboxylase (AccC) and two subunits each of ACCase subunit alpha (AccA) and ACCase subunit beta (AccD).

It is found in the cytoplasm. It carries out the reaction N(6)-carboxybiotinyl-L-lysyl-[protein] + acetyl-CoA = N(6)-biotinyl-L-lysyl-[protein] + malonyl-CoA. It functions in the pathway lipid metabolism; malonyl-CoA biosynthesis; malonyl-CoA from acetyl-CoA: step 1/1. Its function is as follows. Component of the acetyl coenzyme A carboxylase (ACC) complex. First, biotin carboxylase catalyzes the carboxylation of biotin on its carrier protein (BCCP) and then the CO(2) group is transferred by the carboxyltransferase to acetyl-CoA to form malonyl-CoA. The polypeptide is Acetyl-coenzyme A carboxylase carboxyl transferase subunit alpha (Bradyrhizobium sp. (strain ORS 278)).